The following is a 365-amino-acid chain: Chorismate synthase (365 aa).

Residues arginine 48 and arginine 54 each coordinate NADP(+). Residues arginine 125–serine 127, asparagine 237–alanine 238, glycine 277, lysine 292–serine 296, and arginine 318 each bind FMN.

Belongs to the chorismate synthase family. As to quaternary structure, homotetramer. FMNH2 is required as a cofactor.

It carries out the reaction 5-O-(1-carboxyvinyl)-3-phosphoshikimate = chorismate + phosphate. Its pathway is metabolic intermediate biosynthesis; chorismate biosynthesis; chorismate from D-erythrose 4-phosphate and phosphoenolpyruvate: step 7/7. Functionally, catalyzes the anti-1,4-elimination of the C-3 phosphate and the C-6 proR hydrogen from 5-enolpyruvylshikimate-3-phosphate (EPSP) to yield chorismate, which is the branch point compound that serves as the starting substrate for the three terminal pathways of aromatic amino acid biosynthesis. This reaction introduces a second double bond into the aromatic ring system. The sequence is that of Chorismate synthase from Polaromonas sp. (strain JS666 / ATCC BAA-500).